Here is a 468-residue protein sequence, read N- to C-terminus: Tyrosine-protein phosphatase YopH (468 aa).

The disordered stretch occupies residues 127–194 (ARGHVSSHSH…TVSPYGPEAR (68 aa)). Low complexity predominate over residues 130–141 (HVSSHSHSALHA). The Tyrosine-protein phosphatase domain occupies 152-461 (SHLDPRTPPL…DVLIKLAEGQ (310 aa)). The active-site Phosphocysteine intermediate is the Cys403.

This sequence belongs to the protein-tyrosine phosphatase family. Non-receptor class subfamily.

The protein resides in the secreted. It catalyses the reaction O-phospho-L-tyrosyl-[protein] + H2O = L-tyrosyl-[protein] + phosphate. Its function is as follows. Essential virulence determinant. This protein is a protein tyrosine phosphatase. The essential function of YopH in Yersinia pathogenesis is host-protein dephosphorylation. It contributes to the ability of the bacteria to resist phagocytosis by peritoneal macrophages. The protein is Tyrosine-protein phosphatase YopH (yopH) of Yersinia pseudotuberculosis serotype I (strain IP32953).